We begin with the raw amino-acid sequence, 156 residues long: ACCSTSFCGFPICSSVGTCGSSCGQPTCSQTSCCQPTSIQTSCCQPISIQTSCCQPTCLQTSGCETGCGIGGSIGYDQVGSSGAVSSRTRWCRPDCRVEGTSLPPCCVVSCTSPSCCQLYYAQASCCRPSYCGQSCCRPACCCQPTCIEPVCEPTC.

The residue at position 1 (Ala-1) is an N-acetylalanine. Repeats lie at residues 26–35 (PTCSQTSCCQ), 36–45 (PTSIQTSCCQ), 46–55 (PISIQTSCCQ), and 56–65 (PTCLQTSGCE).

In terms of biological role, the keratin products of mammalian epidermal derivatives such as wool and hair consist of microfibrils embedded in a rigid matrix of other proteins. The matrix proteins include the high-sulfur and high-tyrosine keratins, having molecular weights of 6-20 kDa, whereas the microfibrils contain the larger, low-sulfur keratins (40-56 kDa). This Ovis aries (Sheep) protein is Keratin, high-sulfur matrix protein, B2B.